The chain runs to 473 residues: MRKLLTNLPAAAVLSAQVYSAVLQGLWEENVCGTPGRTRVCTALLYGQVCPFQDSTDGLRTITSILFNWPPENTSVYYQPPQRSSFRIKLAFRNLSWPGLGLEDHQEIVLGQLVLPEPNEAKPDDPAPRPGQHALTMPALEPAPPLLADLGPALEPESPAALGPPGYLHSAPGPAPAPGEGPPPGTVLEPQSAPESSCPCRGSVKNQPSEELPDMTTFPPRLLAEQLTLMDAELFKKVVLHECLGCIWGQGHLKGNEHMAPTVRATIAHFNRLTNCITTSCLGDHSMRARDRARVVEHWIKVARECLSLNNFSSVHVIVSALCSNPIGQLHKTWAGVSSKSMKELKELCKKDTAVKRDLLIKAGSFKVATQERNPQRVQMRLRRQKKGVVPFLGDFLTELQRLDSAIPDDLDGNTNKRSKEVRVLQEMQLLQVAAMNYRLRPLEKFVTYFTRMEQLSDKESYKLSCQLEPENP.

Residues 117–215 (EPNEAKPDDP…NQPSEELPDM (99 aa)) form a disordered region. Over residues 134–157 (ALTMPALEPAPPLLADLGPALEPE) the composition is skewed to low complexity. Over residues 173 to 185 (GPAPAPGEGPPPG) the composition is skewed to pro residues. The Ras-GEF domain maps to 219 to 471 (PPRLLAEQLT…YKLSCQLEPE (253 aa)).

The protein localises to the cytoplasmic vesicle. This is Ral-GDS-related protein (RGL4) from Homo sapiens (Human).